The sequence spans 399 residues: Beta-1,6-galactosyltransferase GALT31A (399 aa).

Residues 1 to 12 lie on the Cytoplasmic side of the membrane; sequence MGMGRYQKSATS. Residues 13 to 35 traverse the membrane as a helical; Signal-anchor for type II membrane protein segment; that stretch reads GVSARWVFVLCISSFLLGVLVVN. At 36–399 the chain is on the lumenal side; that stretch reads RLLASFETVD…GDGAIWHSSF (364 aa).

Belongs to the glycosyltransferase 31 family. Interacts with GALT29A. Mn(2+) is required as a cofactor.

It localises to the golgi apparatus membrane. It participates in protein modification; protein glycosylation. Its function is as follows. Beta-galactosyltransferase involved in elongation of beta-1,6-linked galactan side chains on arabinogalactan proteins. Required for the progression of embryogenesis beyond the globular stage. Beta-galactosyltransferase involved in the biosynthesis of type II arabinogalactan. Transfers galactose from UDP-galactose to a mixture of various oligosaccharides derived from arabinogalactan proteins. Forms a complex with GALT29A that can work cooperatively to enhance the activities of adding galactose residues at O6 positions to beta-1,6-linked galactan and beta-1,3-linked galactan. The polypeptide is Beta-1,6-galactosyltransferase GALT31A (Arabidopsis thaliana (Mouse-ear cress)).